Reading from the N-terminus, the 388-residue chain is NADH-quinone oxidoreductase subunit D 2 (388 aa).

Belongs to the complex I 49 kDa subunit family. In terms of assembly, NDH-1 is composed of 14 different subunits. Subunits NuoB, C, D, E, F, and G constitute the peripheral sector of the complex.

Its subcellular location is the cell inner membrane. The enzyme catalyses a quinone + NADH + 5 H(+)(in) = a quinol + NAD(+) + 4 H(+)(out). NDH-1 shuttles electrons from NADH, via FMN and iron-sulfur (Fe-S) centers, to quinones in the respiratory chain. The immediate electron acceptor for the enzyme in this species is believed to be ubiquinone. Couples the redox reaction to proton translocation (for every two electrons transferred, four hydrogen ions are translocated across the cytoplasmic membrane), and thus conserves the redox energy in a proton gradient. In Sorangium cellulosum (strain So ce56) (Polyangium cellulosum (strain So ce56)), this protein is NADH-quinone oxidoreductase subunit D 2.